We begin with the raw amino-acid sequence, 342 residues long: Oxygen-dependent coproporphyrinogen-III oxidase (342 aa).

A substrate-binding site is contributed by S98. 2 residues coordinate a divalent metal cation: H102 and H112. The active-site Proton donor is H112. Residue 114 to 116 (NYR) coordinates substrate. A divalent metal cation contacts are provided by H146 and H176. The interval 266–301 (YVEFNLVWDRGTIFGLQTNGRTESILMSLPPLARWE) is important for dimerization.

The protein belongs to the aerobic coproporphyrinogen-III oxidase family. As to quaternary structure, homodimer. A divalent metal cation is required as a cofactor.

It is found in the cytoplasm. The catalysed reaction is coproporphyrinogen III + O2 + 2 H(+) = protoporphyrinogen IX + 2 CO2 + 2 H2O. It functions in the pathway porphyrin-containing compound metabolism; protoporphyrin-IX biosynthesis; protoporphyrinogen-IX from coproporphyrinogen-III (O2 route): step 1/1. Its function is as follows. Involved in the heme and chlorophyll biosynthesis. Catalyzes the aerobic oxidative decarboxylation of propionate groups of rings A and B of coproporphyrinogen-III to yield the vinyl groups in protoporphyrinogen-IX. The protein is Oxygen-dependent coproporphyrinogen-III oxidase of Prochlorococcus marinus (strain MIT 9515).